Here is a 556-residue protein sequence, read N- to C-terminus: Urocanate hydratase (556 aa).

Residues glycine 52–glycine 53, glutamine 130, glycine 176–glycine 178, glutamate 196, arginine 201, asparagine 242–alanine 243, glutamine 263–histidine 267, tyrosine 273–leucine 274, and tyrosine 322 each bind NAD(+). Cysteine 410 is a catalytic residue. Residue glycine 492 participates in NAD(+) binding.

Belongs to the urocanase family. NAD(+) serves as cofactor.

It is found in the cytoplasm. The catalysed reaction is 4-imidazolone-5-propanoate = trans-urocanate + H2O. The protein operates within amino-acid degradation; L-histidine degradation into L-glutamate; N-formimidoyl-L-glutamate from L-histidine: step 2/3. Functionally, catalyzes the conversion of urocanate to 4-imidazolone-5-propionate. The chain is Urocanate hydratase from Shewanella sp. (strain MR-7).